The sequence spans 136 residues: Large ribosomal subunit protein uL16 (136 aa).

It belongs to the universal ribosomal protein uL16 family. As to quaternary structure, part of the 50S ribosomal subunit.

Functionally, binds 23S rRNA and is also seen to make contacts with the A and possibly P site tRNAs. This chain is Large ribosomal subunit protein uL16, found in Proteus mirabilis (strain HI4320).